A 349-amino-acid polypeptide reads, in one-letter code: Fructose-1,6-bisphosphatase class 1 (349 aa).

Mg(2+) contacts are provided by glutamate 91, aspartate 110, leucine 112, and aspartate 113. Substrate contacts are provided by residues 113-116 and asparagine 205; that span reads DGSS. Glutamate 277 is a Mg(2+) binding site.

This sequence belongs to the FBPase class 1 family. Homotetramer. Requires Mg(2+) as cofactor.

The protein localises to the cytoplasm. It catalyses the reaction beta-D-fructose 1,6-bisphosphate + H2O = beta-D-fructose 6-phosphate + phosphate. Its pathway is carbohydrate biosynthesis; gluconeogenesis. This is Fructose-1,6-bisphosphatase class 1 from Rhizobium meliloti (strain 1021) (Ensifer meliloti).